The chain runs to 354 residues: Transcription termination factor 3, mitochondrial (354 aa).

The transit peptide at 1–89 directs the protein to the mitochondrion; it reads MFCSALRNIL…SFNLAAYVNN (89 aa).

This sequence belongs to the mTERF family.

It localises to the mitochondrion. Its function is as follows. Binds promoter DNA and regulates initiation of transcription. Regulator of mitochondrial ribosome biogenesis and translation that is essential for development. Required for normal mitochondrial transcription and translation. Required for assembly of mitochondrial respiratory complexes and normal mitochondrial function. Maintains 16S rRNA levels and functions in mitochondrial ribosome assembly by regulating the biogenesis of the 39S ribosomal subunit. This is Transcription termination factor 3, mitochondrial from Drosophila melanogaster (Fruit fly).